Reading from the N-terminus, the 1388-residue chain is MTMDADAMETETTDQVSASPLHFARSYQVEALEKAIKQNTIVFLETGSGKTLIAIMLLRSYAYLFRKPSPCFCVFLVPQVVLVTQQAEALKMHTDLKVGMYWGDMGVDFWDSSTWKQEVDKYEVLVMTPAILLDALRHSFLSLSMIKVLIVDECHHAGGKHPYACIMREFYHKELNSGTSNVPRIFGMTASLVKTKGENLDSYWKKIHELETLMNSKVYTCENESVLAGFVPFSTPSFKYYQHIKIPSPKRASLVEKLERLTIKHRLSLGTLDLNSSTVDSVEKRLLRISSTLTYCLDDLGILLAQKAAQSLSASQNDSFLWGELNMFSVALVKKFCSDASQEFLAEIPQGLNWSVANINGNAEAGLLTLKTVCLIETLLGYSSLENIRCIIFVDRVITAIVLESLLAEILPNCNNWKTKYVAGNNSGLQNQTRKKQNEIVEDFRRGLVNIIVATSILEEGLDVQSCNLVIRFDPASNICSFIQSRGRARMQNSDYLMMVESGDLLTQSRLMKYLSGGKRMREESLDHSLVPCPPLPDDSDEPLFRVESTGATVTLSSSVSLIYHYCSRLPSDEYFKPAPRFDVNKDQGSCTLYLPKSCPVKEVKAEANNKVLKQAVCLKACIQLHKVGALSDHLVPDMVVAETVSQKLEKIQYNTEQPCYFPPELVSQFSAQPETTYHFYLIRMKPNSPRNFHLNDVLLGTRVVLEDDIGNTSFRLEDHRGTIAVTLSYVGAFHLTQEEVLFCRRFQITLFRVLLDHSVENLMEALNGLHLRDGVALDYLLVPSTHSHETSLIDWEVIRSVNLTSHEVLEKHENCSTNGASRILHTKDGLFCTCVVQNALVYTPHNGYVYCTKGVLNNLNGNSLLTKRNSGDQTYIEYYEERHGIQLNFVDEPLLNGRHIFTLHSYLHMAKKKKEKEHDREFVELPPELCHVILSPISVDMIYSYTFIPSVMQRIESLLIAYNLKKSIPKVNIPTIKVLEAITTKKCEDQFHLESLETLGDSFLKYAVCQQLFQHCHTHHEGLLSTKKDGMISNVMLCQFGCQQKLQGFIRDECFEPKGWMVPGQSSAAYSLVNDTLPESRNIYVASRRNLKRKSVADVVESLIGAYLSEGGELAALMFMNWVGIKVDFTTTKIQRDSPIQAEKLVNVGYMESLLNYSFEDKSLLVEALTHGSYMMPEIPRCYQRLEFLGDSVLDYLITKHLYDKYPCLSPGLLTDMRSASVNNECYALVAVKANLHKHILYASHHLHKHISRTVSEFEQSSLQSTFGWESDISFPKVLGDVIESLAGAIFVDSGYNKEVVFASIKPLLGCMITPETVKLHPVRELTELCQKWQFELSKAKDFDSFTVEVKAKEMSFAHTAKASDKKMAKKLAYKEVLNLLKNSLDY.

A Helicase ATP-binding domain is found at 31 to 210 (ALEKAIKQNT…DSYWKKIHEL (180 aa)). Residue 44-51 (LETGSGKT) participates in ATP binding. Positions 152 to 155 (DECH) match the DECH box motif. Positions 380-544 (LGYSSLENIR…PLPDDSDEPL (165 aa)) constitute a Helicase C-terminal domain. Residues 559 to 645 (SVSLIYHYCS…VPDMVVAETV (87 aa)) enclose the Dicer dsRNA-binding fold domain. One can recognise a PAZ domain in the interval 805 to 935 (TSHEVLEKHE…LPPELCHVIL (131 aa)). RNase III domains lie at 962-1113 (AYNL…SEGG) and 1149-1296 (VGYM…VDSG). 3 residues coordinate Mg(2+): Glu-1188, Asp-1282, and Glu-1285. The 70-residue stretch at 1315-1384 (TPETVKLHPV…YKEVLNLLKN (70 aa)) folds into the DRBM domain.

It belongs to the helicase family. Dicer subfamily. Requires Mg(2+) as cofactor. Mn(2+) is required as a cofactor.

It is found in the nucleus. The protein localises to the cytoplasm. Ribonuclease (RNase) III involved in RNA-mediated post-transcriptional gene silencing (PTGS). Involved in the processing of natural small interfering RNAs (nat-siRNAs, derived from cis-natural antisense transcripts) by cleaving small dsRNAs into 24 nucleotide nat-siRNAs. Plays an essential role in transitive silencing of transgenes by processing secondary siRNAs. This pathway, which requires DCL4 and RDR6, amplifies silencing by using the target RNA as substrate to generate secondary siRNAs, providing an efficient mechanism for long-distance silencing. May participate with DCL3 in the production of 24 nucleotide repeat-associated siRNAs (ra-siRNAs) which derive from heterochromatin and DNA repeats such as transposons. Plays a role in antiviral RNA silencing. Involved in the production of viral siRNAs derived from the turnip crinkle virus (TCV) and tobacco rattle virus (TRV). Targeted by the viral silencing suppressor (VSR) protein 2b of the cucumber mosaic virus (CMV) that inactivates DCL2 function in RNA silencing. Does not seem to be involved in microRNAs (miRNAs) processing. The chain is Endoribonuclease Dicer homolog 2 from Arabidopsis thaliana (Mouse-ear cress).